The primary structure comprises 546 residues: CTP synthase (546 aa).

The tract at residues 1–266 is amidoligase domain; the sequence is MTTRYIFVTG…DQLVTKRFGI (266 aa). Position 14 (S14) interacts with CTP. S14 serves as a coordination point for UTP. ATP is bound by residues 15-20 and D72; that span reads SLGKGI. 2 residues coordinate Mg(2+): D72 and E140. CTP-binding positions include 147–149, 187–192, and K223; these read DIE and KTKPTQ. Residues 187 to 192 and K223 each bind UTP; that span reads KTKPTQ. 239-241 provides a ligand contact to ATP; it reads KDV. The region spanning 291 to 542 is the Glutamine amidotransferase type-1 domain; that stretch reads TIGMVGKYIE…VAAAYTYQKR (252 aa). Residue G352 coordinates L-glutamine. C379 serves as the catalytic Nucleophile; for glutamine hydrolysis. L-glutamine-binding positions include 380 to 383, E403, and R470; that span reads LGMQ. Active-site residues include H515 and E517.

Belongs to the CTP synthase family. As to quaternary structure, homotetramer.

It carries out the reaction UTP + L-glutamine + ATP + H2O = CTP + L-glutamate + ADP + phosphate + 2 H(+). The enzyme catalyses L-glutamine + H2O = L-glutamate + NH4(+). The catalysed reaction is UTP + NH4(+) + ATP = CTP + ADP + phosphate + 2 H(+). The protein operates within pyrimidine metabolism; CTP biosynthesis via de novo pathway; CTP from UDP: step 2/2. Its activity is regulated as follows. Allosterically activated by GTP, when glutamine is the substrate; GTP has no effect on the reaction when ammonia is the substrate. The allosteric effector GTP functions by stabilizing the protein conformation that binds the tetrahedral intermediate(s) formed during glutamine hydrolysis. Inhibited by the product CTP, via allosteric rather than competitive inhibition. Its function is as follows. Catalyzes the ATP-dependent amination of UTP to CTP with either L-glutamine or ammonia as the source of nitrogen. Regulates intracellular CTP levels through interactions with the four ribonucleotide triphosphates. The protein is CTP synthase of Shewanella halifaxensis (strain HAW-EB4).